Consider the following 192-residue polypeptide: MYVVFEGIDCVGKSTQISLLKEIYKDAIFTLEPGGTELGKHLREILLNKTHPINKRAELLLFLADRAQHFEEILKINQNKLIISDRSFISGMAYAKDFENDLLFALNSFALENFFPQKIIFLKGDANLIQERLSQKELDSIEKRGIEYFLSVQDKLEKVLHFLKEKISIEILTLDAKESKEKLHQQIKEFLQ.

Residue 7–14 (GIDCVGKS) participates in ATP binding.

This sequence belongs to the thymidylate kinase family.

It carries out the reaction dTMP + ATP = dTDP + ADP. Phosphorylation of dTMP to form dTDP in both de novo and salvage pathways of dTTP synthesis. The polypeptide is Thymidylate kinase (Campylobacter jejuni subsp. jejuni serotype O:23/36 (strain 81-176)).